A 213-amino-acid chain; its full sequence is Protein big brother (213 aa).

This sequence belongs to the CBF-beta family.

It is found in the nucleus. Regulates the DNA-binding properties of Runt. The chain is Protein big brother (Bgb) from Drosophila melanogaster (Fruit fly).